The primary structure comprises 313 residues: Formimidoylglutamase (313 aa).

Mn(2+)-binding residues include His130, Asp155, His157, Asp159, Asp241, and Asp243.

It belongs to the arginase family. It depends on Mn(2+) as a cofactor.

It carries out the reaction N-formimidoyl-L-glutamate + H2O = formamide + L-glutamate. Its pathway is amino-acid degradation; L-histidine degradation into L-glutamate; L-glutamate from N-formimidoyl-L-glutamate (hydrolase route): step 1/1. Its function is as follows. Catalyzes the conversion of N-formimidoyl-L-glutamate to L-glutamate and formamide. The protein is Formimidoylglutamase of Salmonella paratyphi B (strain ATCC BAA-1250 / SPB7).